The following is a 250-amino-acid chain: DNA repair protein RecO (250 aa).

Belongs to the RecO family.

Functionally, involved in DNA repair and RecF pathway recombination. The protein is DNA repair protein RecO of Beijerinckia indica subsp. indica (strain ATCC 9039 / DSM 1715 / NCIMB 8712).